The primary structure comprises 213 residues: Adenylate kinase (213 aa).

10–15 is an ATP binding site; that stretch reads GAGKGT. Residues 30 to 59 are NMP; sequence AVGDIFRTIIKTSTSEAELINNYVKQGALI. AMP is bound by residues Arg36, 57–59, 85–88, and Gln92; these read ALI and GYPR. An LID region spans residues 123–161; the sequence is GRYSCKNCGKIYNIHFLQPKIEHVCDVCSSSVFDYRKDD. Arg124 contacts ATP. The Zn(2+) site is built by Cys127 and Cys130. An ATP-binding site is contributed by 133-134; it reads IY. Residues Cys147 and Cys150 each coordinate Zn(2+). Residues Arg158 and Arg169 each contribute to the AMP site. Lys197 contributes to the ATP binding site.

It belongs to the adenylate kinase family. Monomer.

It localises to the cytoplasm. The enzyme catalyses AMP + ATP = 2 ADP. Its pathway is purine metabolism; AMP biosynthesis via salvage pathway; AMP from ADP: step 1/1. Its function is as follows. Catalyzes the reversible transfer of the terminal phosphate group between ATP and AMP. Plays an important role in cellular energy homeostasis and in adenine nucleotide metabolism. The polypeptide is Adenylate kinase (Rickettsia prowazekii (strain Madrid E)).